The primary structure comprises 329 residues: Phosphatidylcholine:ceramide cholinephosphotransferase 3 (329 aa).

Residues 1-26 (MAVPPVEMYSGSFWNRMRKPLPLRTQ) are Cytoplasmic-facing. Residues 27–47 (VIRFTVVFVIVSFILAVALQI) form a helical membrane-spanning segment. Residues 48-74 (THERMPDPKVTKPLPDLGFELLTKVPG) are Extracellular-facing. Residues 75–95 (MYVLADCCIGFLNILSVFTAF) form a helical membrane-spanning segment. Topologically, residues 96–147 (KLYLLHRHCVGSGEPELPCNIPGVSRFFLSVWLCKENCRIELRNIHTIAWIR) are cytoplasmic. Residues 148–168 (FITSYALLLLFRSAVIVMTSL) traverse the membrane as a helical segment. Topologically, residues 169–211 (PAPDDLCQNPPKIENPVKNVILTVLTAGAGSIHCGDLMYSGHT) are extracellular. Residues 212–232 (VILTLHLMFHWIYGAMVHWSF) traverse the membrane as a helical segment. Position 233 (arginine 233) is a topological domain, cytoplasmic. Residues 234 to 254 (PVVTVVAIFGYYCIVASRFHY) traverse the membrane as a helical segment. Over 255-257 (TDD) the chain is Extracellular. Residues 258–278 (VLVAIYLTIATFIAVGHNADG) form a helical membrane-spanning segment. At 279-329 (APWQLQLFIRWWPCCGANSREVTEDSQPVMVAFKSEAAGQSSRKVVDERNH) the chain is on the cytoplasmic side.

This sequence belongs to the sphingomyelin synthase family.

It localises to the membrane. It catalyses the reaction an N-acylsphing-4-enine + a 1,2-diacyl-sn-glycero-3-phosphocholine = a sphingomyelin + a 1,2-diacyl-sn-glycerol. It carries out the reaction an N-acylsphinganine + a 1,2-diacyl-sn-glycero-3-phosphocholine = an N-acylsphinganine-1-phosphocholine + a 1,2-diacyl-sn-glycerol. The enzyme catalyses an N-acylsphing-4-enine + a 1,2-diacyl-sn-glycero-3-phosphoethanolamine = an N-acylsphing-4-enine 1-phosphoethanolamine + a 1,2-diacyl-sn-glycerol. The catalysed reaction is an N-acylsphinganine + a 1,2-diacyl-sn-glycero-3-phosphoethanolamine = an N-acylsphinganine-1-phosphoethanolamine + a 1,2-diacyl-sn-glycerol. Functionally, bifunctional sphingomyelin (SM)/ethanolamine phosphorylceramide (EPC) synthase with minimal inositol phosphorylceramide (IPC) synthase activity. Specificity is likely to be defined by residues in the lumenal catalytic domain that interact with the polar head groups of the phospholipid donors. SM is synthesized by both stages of the parasite life cycle, bloodstream forms (BSF) and procyclic forms (PCF), by transferring the phosphocholine from a 1,2-diacyl-sn-glycero-3-phosphocholine to an N-acylsphing-4-enine (ceramide) or an N-acylsphinganine (dihydroceramide). Similarly, EPC is synthesized by transferring phosphoethanolamine from a 1,2-diacyl-sn-glycero-3-phosphoethanolamine to ceramide or dihydroceramide by BSF and PCF, while IPC is confined to PCF. The ceramide/dihydroceramide ratios are skewed towards dihydroceramide in PCF parasites and ceramide in BSF parasites, this is likely due to differential expression and/or regulation of dihydroceramide desaturase, the enzyme responsible for converting dihydroceramide to ceramide. In Trypanosoma brucei brucei, this protein is Phosphatidylcholine:ceramide cholinephosphotransferase 3.